The following is a 430-amino-acid chain: Phosphomethylpyrimidine synthase (430 aa).

Substrate contacts are provided by residues asparagine 68, methionine 96, tyrosine 125, histidine 164, 186–188 (SRG), 227–230 (DALR), and glutamate 266. Position 270 (histidine 270) interacts with Zn(2+). Tyrosine 293 serves as a coordination point for substrate. Residue histidine 334 coordinates Zn(2+). The [4Fe-4S] cluster site is built by cysteine 410, cysteine 413, and cysteine 417.

This sequence belongs to the ThiC family. [4Fe-4S] cluster is required as a cofactor.

The enzyme catalyses 5-amino-1-(5-phospho-beta-D-ribosyl)imidazole + S-adenosyl-L-methionine = 4-amino-2-methyl-5-(phosphooxymethyl)pyrimidine + CO + 5'-deoxyadenosine + formate + L-methionine + 3 H(+). It participates in cofactor biosynthesis; thiamine diphosphate biosynthesis. Its function is as follows. Catalyzes the synthesis of the hydroxymethylpyrimidine phosphate (HMP-P) moiety of thiamine from aminoimidazole ribotide (AIR) in a radical S-adenosyl-L-methionine (SAM)-dependent reaction. The polypeptide is Phosphomethylpyrimidine synthase (Pyrobaculum aerophilum (strain ATCC 51768 / DSM 7523 / JCM 9630 / CIP 104966 / NBRC 100827 / IM2)).